Consider the following 484-residue polypeptide: ATP synthase subunit beta, chloroplastic (484 aa).

163 to 170 (GGAGVGKT) serves as a coordination point for ATP.

It belongs to the ATPase alpha/beta chains family. In terms of assembly, F-type ATPases have 2 components, CF(1) - the catalytic core - and CF(0) - the membrane proton channel. CF(1) has five subunits: alpha(3), beta(3), gamma(1), delta(1), epsilon(1). CF(0) has four main subunits: a(1), b(1), b'(1) and c(9-12).

The protein resides in the plastid. Its subcellular location is the chloroplast thylakoid membrane. It carries out the reaction ATP + H2O + 4 H(+)(in) = ADP + phosphate + 5 H(+)(out). Functionally, produces ATP from ADP in the presence of a proton gradient across the membrane. The catalytic sites are hosted primarily by the beta subunits. This chain is ATP synthase subunit beta, chloroplastic, found in Stigeoclonium helveticum (Green alga).